The primary structure comprises 74 residues: Conotoxin VnMEKL-0221 (74 aa).

An N-terminal signal peptide occupies residues 1–19 (MEKLTILLLVAAVLMWTQA). A propeptide spanning residues 20 to 46 (LIQEKRPKEKIKFLSKRKTTAESWWEG) is cleaved from the precursor. Cystine bridges form between Cys48–Cys62, Cys55–Cys66, and Cys61–Cys71.

This sequence belongs to the conotoxin O2 superfamily. Expressed by the venom duct.

It localises to the secreted. The protein is Conotoxin VnMEKL-0221 of Conus ventricosus (Mediterranean cone).